A 385-amino-acid polypeptide reads, in one-letter code: Homoserine O-succinyltransferase (385 aa).

The AB hydrolase-1 domain occupies 51–359 (NAILICHALS…EATEGHDAFL (309 aa)). Serine 157 serves as the catalytic Nucleophile. Arginine 227 serves as a coordination point for substrate. Residues aspartate 322 and histidine 355 contribute to the active site. Aspartate 356 contacts substrate.

It belongs to the AB hydrolase superfamily. MetX family. In terms of assembly, homodimer.

The protein localises to the cytoplasm. The catalysed reaction is L-homoserine + succinyl-CoA = O-succinyl-L-homoserine + CoA. Its pathway is amino-acid biosynthesis; L-methionine biosynthesis via de novo pathway; O-succinyl-L-homoserine from L-homoserine: step 1/1. Functionally, transfers a succinyl group from succinyl-CoA to L-homoserine, forming succinyl-L-homoserine. This is Homoserine O-succinyltransferase from Marinomonas sp. (strain MWYL1).